The sequence spans 132 residues: Small ribosomal subunit protein uS11 (132 aa).

This sequence belongs to the universal ribosomal protein uS11 family. In terms of assembly, part of the 30S ribosomal subunit. Interacts with proteins S7 and S18. Binds to IF-3.

Functionally, located on the platform of the 30S subunit, it bridges several disparate RNA helices of the 16S rRNA. Forms part of the Shine-Dalgarno cleft in the 70S ribosome. The protein is Small ribosomal subunit protein uS11 of Leifsonia xyli subsp. xyli (strain CTCB07).